The sequence spans 275 residues: Vitamin B12-binding protein (275 aa).

The signal sequence occupies residues 1-27 (MKWIKSTGSIGLSLLLFLSSFSHSLYA). The region spanning 31 to 275 (RVISLSPSTT…LCQQLNDNGS (245 aa)) is the Fe/B12 periplasmic-binding domain. A cyanocob(III)alamin-binding site is contributed by Y58. C191 and C267 form a disulfide bridge.

This sequence belongs to the BtuF family. The complex is composed of two ATP-binding proteins (BtuD), two transmembrane proteins (BtuC) and a solute-binding protein (BtuF).

It localises to the periplasm. Part of the ABC transporter complex BtuCDF involved in vitamin B12 import. Binds vitamin B12 and delivers it to the periplasmic surface of BtuC. The polypeptide is Vitamin B12-binding protein (Photorhabdus laumondii subsp. laumondii (strain DSM 15139 / CIP 105565 / TT01) (Photorhabdus luminescens subsp. laumondii)).